Reading from the N-terminus, the 263-residue chain is Acidic leucine-rich nuclear phosphoprotein 32 family member A (263 aa).

LRR repeat units lie at residues 16-37 (QIQELNLDNCRSTSIVGLTDEY), 39-60 (ALESLSLINVGLTTLKGFPKLP), 61-83 (NLKKLELSDNRISSGLNYLTTSP), and 84-105 (KLQYLNLSGNKIKDLETLKPLE). Residues 118-156 (NDATQVDNYREKIFKMLPSLNFLDGFDCNDEEAQSEGDD) form the LRRCT domain. Composition is skewed to acidic residues over residues 144-189 (DCND…DGDN) and 198-232 (YNDDLEEDNSDWEEGEGGGDDDEEDSDIDDADGEA). Residues 144 to 263 (DCNDEEAQSE…ARGKKRKHDG (120 aa)) are disordered. Residues 242 to 254 (SKKEPEKTDESQA) show a composition bias toward basic and acidic residues.

The protein belongs to the ANP32 family. Phosphorylated on serine residues.

It localises to the nucleus. The protein localises to the cytoplasm. In terms of biological role, implicated in a number of cellular processes, including proliferation, differentiation, caspase-dependent and caspase-independent apoptosis, suppression of transformation (tumor suppressor), inhibition of protein phosphatase 2A, regulation of mRNA trafficking and stability, and inhibition of acetyltransferases as part of the INHAT (inhibitor of histone acetyltransferases) complex. In Drosophila pseudoobscura pseudoobscura (Fruit fly), this protein is Acidic leucine-rich nuclear phosphoprotein 32 family member A (Anp32a).